Reading from the N-terminus, the 38-residue chain is Large ribosomal subunit protein bL36 (38 aa).

The protein belongs to the bacterial ribosomal protein bL36 family.

The protein is Large ribosomal subunit protein bL36 of Acinetobacter baylyi (strain ATCC 33305 / BD413 / ADP1).